Here is a 139-residue protein sequence, read N- to C-terminus: Putative nickel-responsive regulator (139 aa).

Positions 77, 88, 90, and 96 each coordinate Ni(2+).

It belongs to the transcriptional regulatory CopG/NikR family. Requires Ni(2+) as cofactor.

Transcriptional regulator. This is Putative nickel-responsive regulator from Haloarcula marismortui (strain ATCC 43049 / DSM 3752 / JCM 8966 / VKM B-1809) (Halobacterium marismortui).